The chain runs to 246 residues: UDP-N-acetyl-D-mannosaminuronic acid transferase (246 aa).

This sequence belongs to the glycosyltransferase 26 family.

It catalyses the reaction UDP-N-acetyl-alpha-D-mannosaminouronate + N-acetyl-alpha-D-glucosaminyl-di-trans,octa-cis-undecaprenyl diphosphate = beta-D-ManNAcA-(1-&gt;4)-alpha-D-GlcNAc-di-trans,octa-cis-undecaprenyl diphosphate + UDP + H(+). It functions in the pathway bacterial outer membrane biogenesis; enterobacterial common antigen biosynthesis. Its function is as follows. Catalyzes the synthesis of Und-PP-GlcNAc-ManNAcA (Lipid II), the second lipid-linked intermediate involved in enterobacterial common antigen (ECA) synthesis. The sequence is that of UDP-N-acetyl-D-mannosaminuronic acid transferase from Escherichia coli (strain K12).